We begin with the raw amino-acid sequence, 449 residues long: Ras-related GTP-binding protein D (449 aa).

The disordered stretch occupies residues 1 to 55 (MSQVLGKPQPQGEDGGEDQEEDELVGLAGYEDGPESSDAELDSGPEEGESRRNSW). Composition is skewed to acidic residues over residues 14-24 (DGGEDQEEDEL) and 32-47 (DGPE…GPEE). Residues Arg120, Arg121, Ser122, Gly123, Lys124, Ser125, Ser126, and Thr140 each coordinate GTP. Arg121, Ser122, Gly123, Lys124, Ser125, Ser126, Thr140, Glu144, and Thr146 together coordinate GDP. Positions 146, 169, 228, 229, and 231 each coordinate GTP. The GDP site is built by His228, Lys229, Asp231, Ser269, and Ile270. A GTP-binding site is contributed by Ile270. The tract at residues 428–449 (KAQSRLPKKTGATPNGTPRVLL) is disordered.

Belongs to the GTR/RAG GTP-binding protein family. In terms of assembly, forms a heterodimer with RRAGA in a sequence-independent manner and RRAGB. Heterodimerization stabilizes RRAG proteins. The GDP-bound form of RRAGD (in complex with the GTP-bound form of RRAGA or RRAGB), interacts with RPTOR, thereby promoting recruitment of mTORC1 to the lysosomes. Component of the lysosomal folliculin complex (LFC), composed of FLCN, FNIP1 (or FNIP2), RagA/RRAGA or RagB/RRAGB GDP-bound, RagC/RRAGC or RagD/RRAGD GTP-bound, and Ragulator. Interacts with NOL8. Interacts with SH3BP4; the interaction with this negative regulator is most probably direct, preferentially occurs with the inactive GDP-bound form of RRAGD and is negatively regulated by amino acids. The Rag heterodimer interacts with SLC38A9; the probable amino acid sensor. Interacts with SESN1, SESN2 and SESN3. The GDP-bound form interacts with TFEB. The GDP-bound form interacts with TFE3. As to expression, expressed in the distal tubule of the kidney.

It localises to the cytoplasm. It is found in the nucleus. The protein resides in the lysosome membrane. It carries out the reaction GTP + H2O = GDP + phosphate + H(+). With respect to regulation, the activation of RagD/RRAGD is mediated by a GTPase activating protein (GAP). In high-amino acid conditions, activated by GTPase activating protein FLCN that stimulates RRAGD GTPase activity to turn it into its active GDP-bound form. In response to amino acid depletion, the GATOR1 complex inactivates RagC/RRAGC by securing the GTP-bound inactive form. Functionally, guanine nucleotide-binding protein that plays a crucial role in the cellular response to amino acid availability through regulation of the mTORC1 signaling cascade. Forms heterodimeric Rag complexes with RagA/RRAGA or RagB/RRAGB and cycles between an inactive GTP-bound and an active GDP-bound form: RagD/RRAGD is in its active form when GDP-bound RagD/RRAGD forms a complex with GTP-bound RagA/RRAGA (or RagB/RRAGB) and in an inactive form when GTP-bound RagD/RRAGD heterodimerizes with GDP-bound RagA/RRAGA (or RagB/RRAGB). In its active form, promotes the recruitment of mTORC1 to the lysosomes and its subsequent activation by the GTPase RHEB. This is a crucial step in the activation of the MTOR signaling cascade by amino acids. Also plays a central role in the non-canonical mTORC1 complex, which acts independently of RHEB and specifically mediates phosphorylation of MiT/TFE factors TFEB and TFE3: GDP-bound RagD/RRAGD mediates recruitment of MiT/TFE factors TFEB and TFE3. The protein is Ras-related GTP-binding protein D of Mus musculus (Mouse).